The chain runs to 722 residues: Ribosomal RNA large subunit methyltransferase K/L (722 aa).

The 112-residue stretch at 43 to 154 (IGLRACLWSR…GNEGRVGIDL (112 aa)) folds into the THUMP domain.

Belongs to the methyltransferase superfamily. RlmKL family.

The protein localises to the cytoplasm. It carries out the reaction guanosine(2445) in 23S rRNA + S-adenosyl-L-methionine = N(2)-methylguanosine(2445) in 23S rRNA + S-adenosyl-L-homocysteine + H(+). The catalysed reaction is guanosine(2069) in 23S rRNA + S-adenosyl-L-methionine = N(2)-methylguanosine(2069) in 23S rRNA + S-adenosyl-L-homocysteine + H(+). In terms of biological role, specifically methylates the guanine in position 2445 (m2G2445) and the guanine in position 2069 (m7G2069) of 23S rRNA. This chain is Ribosomal RNA large subunit methyltransferase K/L, found in Magnetococcus marinus (strain ATCC BAA-1437 / JCM 17883 / MC-1).